Reading from the N-terminus, the 219-residue chain is Ribose-5-phosphate isomerase A (219 aa).

Substrate contacts are provided by residues 28 to 31, 81 to 84, and 94 to 97; these read SGST, DGAD, and KGGG. Glu-103 serves as the catalytic Proton acceptor. A substrate-binding site is contributed by Lys-121.

It belongs to the ribose 5-phosphate isomerase family. Homodimer.

It carries out the reaction aldehydo-D-ribose 5-phosphate = D-ribulose 5-phosphate. It participates in carbohydrate degradation; pentose phosphate pathway; D-ribose 5-phosphate from D-ribulose 5-phosphate (non-oxidative stage): step 1/1. Catalyzes the reversible conversion of ribose-5-phosphate to ribulose 5-phosphate. The sequence is that of Ribose-5-phosphate isomerase A from Haemophilus influenzae (strain 86-028NP).